The chain runs to 258 residues: 5'-nucleotidase SurE (258 aa).

A divalent metal cation contacts are provided by aspartate 9, aspartate 10, serine 42, and asparagine 96.

It belongs to the SurE nucleotidase family. It depends on a divalent metal cation as a cofactor.

It localises to the cytoplasm. It catalyses the reaction a ribonucleoside 5'-phosphate + H2O = a ribonucleoside + phosphate. Nucleotidase that shows phosphatase activity on nucleoside 5'-monophosphates. In Campylobacter jejuni subsp. doylei (strain ATCC BAA-1458 / RM4099 / 269.97), this protein is 5'-nucleotidase SurE.